Consider the following 41-residue polypeptide: Large ribosomal subunit protein bL36 (41 aa).

It belongs to the bacterial ribosomal protein bL36 family.

The sequence is that of Large ribosomal subunit protein bL36 from Nitrobacter hamburgensis (strain DSM 10229 / NCIMB 13809 / X14).